The primary structure comprises 199 residues: ATP-dependent Clp protease proteolytic subunit 3 (199 aa).

S101 serves as the catalytic Nucleophile. H126 is an active-site residue.

It belongs to the peptidase S14 family. As to quaternary structure, fourteen ClpP subunits assemble into 2 heptameric rings which stack back to back to give a disk-like structure with a central cavity, resembling the structure of eukaryotic proteasomes.

The protein localises to the cytoplasm. It carries out the reaction Hydrolysis of proteins to small peptides in the presence of ATP and magnesium. alpha-casein is the usual test substrate. In the absence of ATP, only oligopeptides shorter than five residues are hydrolyzed (such as succinyl-Leu-Tyr-|-NHMec, and Leu-Tyr-Leu-|-Tyr-Trp, in which cleavage of the -Tyr-|-Leu- and -Tyr-|-Trp bonds also occurs).. Functionally, cleaves peptides in various proteins in a process that requires ATP hydrolysis. Has a chymotrypsin-like activity. Plays a major role in the degradation of misfolded proteins. The chain is ATP-dependent Clp protease proteolytic subunit 3 from Synechococcus elongatus (strain ATCC 33912 / PCC 7942 / FACHB-805) (Anacystis nidulans R2).